A 380-amino-acid polypeptide reads, in one-letter code: Cytochrome b (380 aa).

4 helical membrane passes run 34-54 (FGSL…LLAM), 78-99 (WLIR…FLHI), 114-134 (WNTG…GYVL), and 179-199 (FFAL…IHLT). Positions 84 and 98 each coordinate heme b. Heme b is bound by residues H183 and H197. Residue H202 coordinates a ubiquinone. 4 helical membrane-spanning segments follow: residues 227-247 (IKDI…TLFS), 289-309 (LGGV…PFLH), 321-341 (LSQT…WIGS), and 348-368 (FIII…ILFP).

It belongs to the cytochrome b family. The cytochrome bc1 complex contains 11 subunits: 3 respiratory subunits (MT-CYB, CYC1 and UQCRFS1), 2 core proteins (UQCRC1 and UQCRC2) and 6 low-molecular weight proteins (UQCRH/QCR6, UQCRB/QCR7, UQCRQ/QCR8, UQCR10/QCR9, UQCR11/QCR10 and a cleavage product of UQCRFS1). This cytochrome bc1 complex then forms a dimer. Heme b is required as a cofactor.

The protein localises to the mitochondrion inner membrane. In terms of biological role, component of the ubiquinol-cytochrome c reductase complex (complex III or cytochrome b-c1 complex) that is part of the mitochondrial respiratory chain. The b-c1 complex mediates electron transfer from ubiquinol to cytochrome c. Contributes to the generation of a proton gradient across the mitochondrial membrane that is then used for ATP synthesis. This is Cytochrome b (MT-CYB) from Alectoris graeca (Rock partridge).